We begin with the raw amino-acid sequence, 1529 residues long: Ras guanine nucleotide exchange factor B (1529 aa).

Residues isoleucine 135–asparagine 186 adopt a coiled-coil conformation. Disordered regions lie at residues isoleucine 290–asparagine 357, threonine 576–histidine 600, lysine 680–glutamine 724, methionine 847–arginine 948, and glutamine 1168–leucine 1206. Low complexity-rich tracts occupy residues threonine 576–asparagine 591, threonine 683–glutamine 724, and asparagine 853–glutamate 887. Coiled coils occupy residues isoleucine 722–lysine 798 and asparagine 871–lysine 898. Residues asparagine 888–lysine 898 are compositionally biased toward basic and acidic residues. Low complexity-rich tracts occupy residues serine 906–threonine 916, serine 924–proline 940, glutamine 1168–proline 1187, and glutamine 1197–leucine 1206. Residues phenylalanine 1075 to asparagine 1205 form the N-terminal Ras-GEF domain. The Ras-GEF domain occupies serine 1282–lysine 1517.

Its subcellular location is the cytoplasm. Functionally, promotes the exchange of Ras-bound GDP by GTP. Involved in phagocytosis, fluid-phase endocytosis, regulation of macropinocytosis and control of cell movement. The polypeptide is Ras guanine nucleotide exchange factor B (gefB) (Dictyostelium discoideum (Social amoeba)).